The sequence spans 98 residues: A-type ATP synthase subunit F (98 aa).

Belongs to the V-ATPase F subunit family. In terms of assembly, the A-type ATPase is composed of subunits A(3), B(3), C, D, E(1 or 2), F, H(2), I and K(x).

Its subcellular location is the cell membrane. Its function is as follows. Component of the A-type ATP synthase that produces ATP from ADP in the presence of a proton gradient across the membrane. The protein is A-type ATP synthase subunit F of Methanocaldococcus jannaschii (strain ATCC 43067 / DSM 2661 / JAL-1 / JCM 10045 / NBRC 100440) (Methanococcus jannaschii).